The following is a 272-amino-acid chain: Acetylglutamate kinase (272 aa).

Substrate is bound by residues 46 to 47, Arg-68, and Asn-166; that span reads GA.

It belongs to the acetylglutamate kinase family. ArgB subfamily.

Its subcellular location is the cytoplasm. The enzyme catalyses N-acetyl-L-glutamate + ATP = N-acetyl-L-glutamyl 5-phosphate + ADP. Its pathway is amino-acid biosynthesis; L-arginine biosynthesis; N(2)-acetyl-L-ornithine from L-glutamate: step 2/4. In terms of biological role, catalyzes the ATP-dependent phosphorylation of N-acetyl-L-glutamate. The chain is Acetylglutamate kinase from Dehalococcoides mccartyi (strain ATCC BAA-2266 / KCTC 15142 / 195) (Dehalococcoides ethenogenes (strain 195)).